A 276-amino-acid polypeptide reads, in one-letter code: Diaminopimelate epimerase (276 aa).

The substrate site is built by Asn-13, Gln-46, and Asn-66. Cys-75 (proton donor) is an active-site residue. Residues 76-77 (GN), Asn-159, Asn-192, and 210-211 (ER) each bind substrate. The active-site Proton acceptor is the Cys-219. 220 to 221 (GS) is a binding site for substrate.

Belongs to the diaminopimelate epimerase family. In terms of assembly, homodimer.

Its subcellular location is the cytoplasm. The catalysed reaction is (2S,6S)-2,6-diaminopimelate = meso-2,6-diaminopimelate. It functions in the pathway amino-acid biosynthesis; L-lysine biosynthesis via DAP pathway; DL-2,6-diaminopimelate from LL-2,6-diaminopimelate: step 1/1. Its function is as follows. Catalyzes the stereoinversion of LL-2,6-diaminopimelate (L,L-DAP) to meso-diaminopimelate (meso-DAP), a precursor of L-lysine and an essential component of the bacterial peptidoglycan. The polypeptide is Diaminopimelate epimerase (Vibrio atlanticus (strain LGP32) (Vibrio splendidus (strain Mel32))).